Reading from the N-terminus, the 269-residue chain is MSVVSMKSLLEAGVHFGHQTRRWNPKMSKFIFTERNGIYIIDLQKTVKQIDDAYNYVRDIVADGGEVLFVGTKKQAQEAIETEAKRCGQHFVSQRWLGGMLTNYKTIKTRINRLHKLYEMEEDGTFDLLPKKEVSQLEREREKLEKNLGGIRKMNKMPSVLFVVDPKKEYIAVHEAKILGIPVVGIVDTNCDPDELDIAIPGNDDAIRAVKLLTSTIADAVIEANQGREDSEDVYSETENDTEETDEELVSEEDLKEFVENSEEESDEE.

A disordered region spans residues A224 to E269. Over residues D230 to E269 the composition is skewed to acidic residues.

It belongs to the universal ribosomal protein uS2 family.

This chain is Small ribosomal subunit protein uS2, found in Finegoldia magna (strain ATCC 29328 / DSM 20472 / WAL 2508) (Peptostreptococcus magnus).